A 189-amino-acid chain; its full sequence is Group XIIA secretory phospholipase A2 (189 aa).

The N-terminal stretch at 1–22 (MALLSRPALTLLLLLMAAVVRC) is a signal peptide. The Ca(2+) site is built by G88, P90, and F92. The active site involves H110. Position 111 (D111) interacts with Ca(2+). D125 is an active-site residue.

Requires Ca(2+) as cofactor. In terms of tissue distribution, abundantly expressed in heart, skeletal muscle, kidney, liver and pancreas.

The protein localises to the secreted. It is found in the cytoplasm. It catalyses the reaction a 1,2-diacyl-sn-glycero-3-phosphocholine + H2O = a 1-acyl-sn-glycero-3-phosphocholine + a fatty acid + H(+). PA2 catalyzes the calcium-dependent hydrolysis of the 2-acyl groups in 3-sn-phosphoglycerides. Does not exhibit detectable activity toward sn-2-arachidonoyl- or linoleoyl-phosphatidylcholine or -phosphatidylethanolamine. The polypeptide is Group XIIA secretory phospholipase A2 (PLA2G12A) (Homo sapiens (Human)).